The primary structure comprises 450 residues: Tubulin beta-1 chain (450 aa).

GTP-binding residues include Q11, E69, S138, G142, T143, G144, N204, and N226. E69 is a binding site for Mg(2+). Positions 426 to 450 are disordered; it reads QDATADEDEYGEEEGDEEEYGQHDI. The segment covering 429 to 444 has biased composition (acidic residues); that stretch reads TADEDEYGEEEGDEEE.

The protein belongs to the tubulin family. As to quaternary structure, dimer of alpha and beta chains. A typical microtubule is a hollow water-filled tube with an outer diameter of 25 nm and an inner diameter of 15 nM. Alpha-beta heterodimers associate head-to-tail to form protofilaments running lengthwise along the microtubule wall with the beta-tubulin subunit facing the microtubule plus end conferring a structural polarity. Microtubules usually have 13 protofilaments but different protofilament numbers can be found in some organisms and specialized cells. Mg(2+) is required as a cofactor.

Its subcellular location is the cytoplasm. The protein resides in the cytoskeleton. Functionally, tubulin is the major constituent of microtubules, a cylinder consisting of laterally associated linear protofilaments composed of alpha- and beta-tubulin heterodimers. Microtubules grow by the addition of GTP-tubulin dimers to the microtubule end, where a stabilizing cap forms. Below the cap, tubulin dimers are in GDP-bound state, owing to GTPase activity of alpha-tubulin. This Pisum sativum (Garden pea) protein is Tubulin beta-1 chain (TUBB1).